A 295-amino-acid polypeptide reads, in one-letter code: 4-diphosphocytidyl-2-C-methyl-D-erythritol kinase (295 aa).

Residue Lys-22 is part of the active site. ATP is bound at residue 106–116; the sequence is PAGGGFGGGSS. Residue Asp-148 is part of the active site.

Belongs to the GHMP kinase family. IspE subfamily.

The enzyme catalyses 4-CDP-2-C-methyl-D-erythritol + ATP = 4-CDP-2-C-methyl-D-erythritol 2-phosphate + ADP + H(+). Its pathway is isoprenoid biosynthesis; isopentenyl diphosphate biosynthesis via DXP pathway; isopentenyl diphosphate from 1-deoxy-D-xylulose 5-phosphate: step 3/6. Catalyzes the phosphorylation of the position 2 hydroxy group of 4-diphosphocytidyl-2C-methyl-D-erythritol. The polypeptide is 4-diphosphocytidyl-2-C-methyl-D-erythritol kinase (Xanthomonas campestris pv. campestris (strain 8004)).